A 519-amino-acid polypeptide reads, in one-letter code: 3-octaprenyl-4-hydroxybenzoate carboxy-lyase (519 aa).

Asparagine 177 provides a ligand contact to Mn(2+). Prenylated FMN-binding positions include 180–182 (IYR), 194–196 (RWL), and 199–200 (RG). Glutamate 243 contributes to the Mn(2+) binding site. The active-site Proton donor is the aspartate 318.

This sequence belongs to the UbiD family. Homohexamer. Prenylated FMN serves as cofactor. Requires Mn(2+) as cofactor.

The protein localises to the cell membrane. The enzyme catalyses a 4-hydroxy-3-(all-trans-polyprenyl)benzoate + H(+) = a 2-(all-trans-polyprenyl)phenol + CO2. It participates in cofactor biosynthesis; ubiquinone biosynthesis. Functionally, catalyzes the decarboxylation of 3-octaprenyl-4-hydroxy benzoate to 2-octaprenylphenol, an intermediate step in ubiquinone biosynthesis. The polypeptide is 3-octaprenyl-4-hydroxybenzoate carboxy-lyase (Burkholderia pseudomallei (strain 1710b)).